The sequence spans 1537 residues: Adhesion G protein-coupled receptor L3 (1537 aa).

Positions 1-19 (MWPPQLLILTMLLAPVVHG) are cleaved as a signal peptide. Topologically, residues 20-943 (GKHNERHPAL…VKHSDAVHDL (924 aa)) are extracellular. The tract at residues 53–80 (PAAERSTAHRGQGPRGAARGVRGPGAPG) is disordered. In terms of domain architecture, SUEL-type lectin spans 103 to 192 (SCESYPIELR…KYLEVQYECV (90 aa)). Cystine bridges form between Cys104/Cys134, Cys113/Cys191, Cys146/Cys178, Cys159/Cys165, and Cys203/Cys385. Asn161 is a glycosylation site (N-linked (GlcNAc...) asparagine). One can recognise an Olfactomedin-like domain in the interval 202 to 461 (LCPGLLKGVY…VVKYSLDFGP (260 aa)). The interval 317–347 (YHDTSPYRWGGKSDIDLAVDENGLWVIYATE) is interaction with FLRT3. 4 residues coordinate Ca(2+): Asp332, Asn380, Ala381, and Val435. Residues 521–540 (RSTTASLPGRRNRSTSTPSP) form a disordered region. Residues Asn532, Asn617, Asn827, Asn840, Asn885, and Asn911 are each glycosylated (N-linked (GlcNAc...) asparagine). The region spanning 756–935 (DIVRENTDNI…AVLMAHVEVK (180 aa)) is the GAIN-B domain. 2 disulfides stabilise this stretch: Cys886/Cys917 and Cys905/Cys919. The GPS stretch occupies residues 886–935 (CSFWSYSKRTMTGYWSTQGCRLLTTNKTHTTCSCNHLTNFAVLMAHVEVK). Residues 923 to 939 (TNFAVLMAHVEVKHSDA) are stachel. A helical membrane pass occupies residues 944–969 (LLDVITWVGILLSLVCLLICIFTFCF). Topologically, residues 970–975 (FRGLQS) are cytoplasmic. The helical transmembrane segment at 976 to 999 (DRNTIHKNLCISLFVAELLFLIGI) threads the bilayer. N-linked (GlcNAc...) asparagine glycosylation occurs at Asn1000. At 1000 to 1006 (NRTDQPI) the chain is on the extracellular side. The chain crosses the membrane as a helical span at residues 1007-1034 (ACAVFAALLHFFFLAAFTWMFLEGVQLY). Cys1008 and Cys1080 are disulfide-bonded. The Cytoplasmic portion of the chain corresponds to 1035 to 1048 (IMLVEVFESEHSRR). Residues 1049–1071 (KYFYLVGYGMPALIVAVSAAVDY) form a helical membrane-spanning segment. The Extracellular portion of the chain corresponds to 1072–1086 (RSYGTDKVCWLRLDT). A helical membrane pass occupies residues 1087–1112 (YFIWSFIGPATLIIMLNVIFLGIALY). The Cytoplasmic segment spans residues 1113–1142 (KMFHHTAILKPESGCLDNINYEDNRPFIKS). Residues 1143–1163 (WVIGAIALLCLLGLTWAFGLM) traverse the membrane as a helical segment. The Extracellular segment spans residues 1164–1168 (YINES). Asn1166 carries an N-linked (GlcNAc...) asparagine glycan. A helical membrane pass occupies residues 1169 to 1195 (TVIMAYLFTIFNSLQGMFIFIFHCVLQ). Over 1196-1537 (KKVRKEYGKC…KGPAHLVTSL (342 aa)) the chain is Cytoplasmic. Positions 1213 to 1237 (GKSTESSIGSGKTSGSRTPGRYSTG) are disordered. Phosphoserine is present on residues Ser1254 and Ser1522. The interval 1512–1537 (FIVPPNKDGASPEGTSKGPAHLVTSL) is disordered. The PDZ-binding motif lies at 1532–1537 (HLVTSL).

This sequence belongs to the G-protein coupled receptor 2 family. LN-TM7 subfamily. Heterodimer of 2 chains generated by proteolytic processing; the large extracellular N-terminal fragment and the membrane-bound C-terminal fragment predominantly remain associated and non-covalently linked. Interacts (via olfactomedin-like domain) with FLRT1 (via extracellular domain). Interacts (via olfactomedin-like domain) with FLRT2 (via extracellular domain). Interacts (via olfactomedin-like domain) with FLRT3 (via extracellular domain); the interaction is direct. Interacts (via extracellular domain) with TENM1. Interacts (via extracellular domain) with TENM2. Interacts (via extracellular domain) with TENM3. Identified in a complex with FLRT3 and UNC5B; does not interact with UNC5B by itself. Identified in a complex with FLRT3 and UNC5D; does not interact with UNC5D by itself. As to quaternary structure, interacts (via PDZ-binding motif) with SHANK3. Interacts (via PDZ-binding motif) with DLG4. Autoproteolytically processed at the GPS region of the GAIN-B domain; this cleavage modulates receptor activity. In terms of processing, O-glycosylated (major) and N-glycosylated. Localizes to postsynaptic spines in non-overlapping dendritic domains of CA1-region pyramidal neurons: specifically localizes to excitatory synapses in the S.oriens and S.radiatum, corresponding to distinct presynaptic inputs onto CA1-region pyramidal neurons.

Its subcellular location is the cell membrane. The protein localises to the postsynaptic cell membrane. The protein resides in the cell projection. It localises to the axon. It is found in the cell junction. Its activity is regulated as follows. Forms a heterodimer of 2 chains generated by proteolytic processing that remain associated through non-covalent interactions mediated by the GAIN-B domain. In the inactivated receptor, the Stachel sequence (also named stalk) is embedded in the GAIN-B domain, where it adopts a beta-strand conformation. On activation, the Stachel moves into the 7 transmembrane region and adopts a twisted hook-shaped configuration that forms contacts within the receptor, leading to coupling of a G-alpha protein, which activates signaling. The cleaved GAIN-B and N-terminal domains can then dissociate from the rest of the receptor. In terms of biological role, orphan adhesion G-protein coupled receptor (aGPCR), which mediates synapse specificity. Ligand binding causes a conformation change that triggers signaling via guanine nucleotide-binding proteins (G proteins) and modulates the activity of downstream effectors. ADGRL3 is coupled with different classes of G alpha proteins, such as G(12)/G(13), G(s), G(i) or G(q), depending on the context. Coupling to G(12)/G(13) G proteins, which mediates the activation Rho small GTPases is the most efficient. Following G-protein coupled receptor activation, associates with cell adhesion molecules that are expressed at the surface of adjacent cells to direct synapse specificity. Specifically mediates the establishment of Schaffer-collateral synapses formed by CA3-region axons on CA1-region pyramidal neurons in the hippocampus. Localizes to postsynaptic spines in excitatory synapses in the S.oriens and S.radiatum and interacts with presynaptic cell adhesion molecules FLRT3 and TENM2, promoting synapse formation. Plays a role in the development of glutamatergic synapses in the cortex. Important in determining the connectivity rates between the principal neurons in the cortex. Functionally, orphan adhesion G-protein coupled receptor (aGPCR), which mediates synapse specificity. Ligand binding causes a conformation change that triggers signaling via guanine nucleotide-binding proteins (G proteins) and modulates the activity of downstream effectors, such as adenylate cyclase. Isoform 1 is specifically coupled to G(s) G proteins and mediates activation of adenylate cyclase activity. Following G-protein coupled receptor activation, undergoes liquid-liquid phase transition, associates with (1) cell adhesion molecules that are expressed at the surface of adjacent cells, as well as (2) PDZ-containing proteins, such as SHANK3 and DLG4, in the cytoplasm to direct synapse formation. Orphan adhesion G-protein coupled receptor (aGPCR). Ligand binding causes a conformation change that triggers signaling via guanine nucleotide-binding proteins (G proteins) and modulates the activity of downstream effectors, such as RhoA pathway. Isoform 7 is coupled to G(12) and/or G(13) G proteins (GNA12 and GNA13, respectively) and mediates the activation Rho small GTPases. The sequence is that of Adhesion G protein-coupled receptor L3 from Mus musculus (Mouse).